Consider the following 496-residue polypeptide: UDP-glycosyltransferase 73C2 (496 aa).

UDP-alpha-D-glucose-binding positions include Ser297, Ser357 to Gln359, His374 to Glu382, and Phe396 to Gln399.

Belongs to the UDP-glycosyltransferase family.

In Arabidopsis thaliana (Mouse-ear cress), this protein is UDP-glycosyltransferase 73C2 (UGT73C2).